A 153-amino-acid chain; its full sequence is D-aminoacyl-tRNA deacylase (153 aa).

The Gly-cisPro motif, important for rejection of L-amino acids motif lies at 137–138 (GP).

This sequence belongs to the DTD family. As to quaternary structure, homodimer.

The protein localises to the cytoplasm. The catalysed reaction is glycyl-tRNA(Ala) + H2O = tRNA(Ala) + glycine + H(+). It catalyses the reaction a D-aminoacyl-tRNA + H2O = a tRNA + a D-alpha-amino acid + H(+). Its function is as follows. An aminoacyl-tRNA editing enzyme that deacylates mischarged D-aminoacyl-tRNAs. Also deacylates mischarged glycyl-tRNA(Ala), protecting cells against glycine mischarging by AlaRS. Acts via tRNA-based rather than protein-based catalysis; rejects L-amino acids rather than detecting D-amino acids in the active site. By recycling D-aminoacyl-tRNA to D-amino acids and free tRNA molecules, this enzyme counteracts the toxicity associated with the formation of D-aminoacyl-tRNA entities in vivo and helps enforce protein L-homochirality. This chain is D-aminoacyl-tRNA deacylase, found in Methylococcus capsulatus (strain ATCC 33009 / NCIMB 11132 / Bath).